Consider the following 121-residue polypeptide: Tachykinin-3 (121 aa).

Residues 1–16 (MRIMLLFTAILAFSLA) form the signal peptide. Positions 17 to 78 (QSFGAVCKEP…TDPKESTSPE (62 aa)) are excised as a propeptide. Residue Met90 is modified to Methionine amide. Residues 93–121 (RSVQPDSPTDVNQENVPSFGILKYPPRAE) form a disordered region. The propeptide occupies 94 to 121 (SVQPDSPTDVNQENVPSFGILKYPPRAE). Over residues 96–108 (QPDSPTDVNQENV) the composition is skewed to polar residues.

Belongs to the tachykinin family.

It is found in the secreted. Its function is as follows. Tachykinins are active peptides which excite neurons, evoke behavioral responses, are potent vasodilators and secretagogues, and contract (directly or indirectly) many smooth muscles. Is a critical central regulator of gonadal function. In Homo sapiens (Human), this protein is Tachykinin-3 (TAC3).